Consider the following 273-residue polypeptide: Transcriptional regulator ICP22 homolog (273 aa).

2 disordered regions span residues 1–57 and 160–273; these read GSCR…YGLP and YEQR…SARR. Over residues 11-33 the composition is skewed to low complexity; that stretch reads PSTSPIIPSLSPSSGGNPSPRSS. Composition is skewed to acidic residues over residues 178-194 and 204-224; these read EECE…EEEA and SPEE…EDDS. Over residues 261 to 273 the composition is skewed to low complexity; the sequence is VPKGGRPAKSARR.

This sequence belongs to the herpesviridae ICP22 family.

The protein is Transcriptional regulator ICP22 homolog of Equus caballus (Horse).